Here is a 218-residue protein sequence, read N- to C-terminus: ATP-dependent Clp protease proteolytic subunit 2 (218 aa).

Belongs to the peptidase S14 family. In terms of assembly, fourteen ClpP subunits assemble into 2 heptameric rings which stack back to back to give a disk-like structure with a central cavity, resembling the structure of eukaryotic proteasomes.

The protein localises to the cytoplasm. It catalyses the reaction Hydrolysis of proteins to small peptides in the presence of ATP and magnesium. alpha-casein is the usual test substrate. In the absence of ATP, only oligopeptides shorter than five residues are hydrolyzed (such as succinyl-Leu-Tyr-|-NHMec, and Leu-Tyr-Leu-|-Tyr-Trp, in which cleavage of the -Tyr-|-Leu- and -Tyr-|-Trp bonds also occurs).. Its function is as follows. Cleaves peptides in various proteins in a process that requires ATP hydrolysis. Has a chymotrypsin-like activity. Plays a major role in the degradation of misfolded proteins. The chain is ATP-dependent Clp protease proteolytic subunit 2 from Gloeobacter violaceus (strain ATCC 29082 / PCC 7421).